Reading from the N-terminus, the 249-residue chain is Triosephosphate isomerase (249 aa).

2 residues coordinate substrate: Asn10 and Lys12. His94 functions as the Electrophile in the catalytic mechanism. Glu166 acts as the Proton acceptor in catalysis.

It belongs to the triosephosphate isomerase family. Homodimer. The N-terminus is blocked.

It catalyses the reaction D-glyceraldehyde 3-phosphate = dihydroxyacetone phosphate. It functions in the pathway carbohydrate biosynthesis; gluconeogenesis. The protein operates within carbohydrate degradation; glycolysis; D-glyceraldehyde 3-phosphate from glycerone phosphate: step 1/1. This chain is Triosephosphate isomerase (TPI1), found in Paracoccidioides lutzii (strain ATCC MYA-826 / Pb01) (Paracoccidioides brasiliensis).